The primary structure comprises 279 residues: Four and a half LIM domains protein 2 (279 aa).

The C4-type zinc-finger motif lies at 7-31 (CHHCNESLFGKKYILREESPYCVVC). 3 consecutive LIM zinc-binding domains span residues 40 to 92 (CEEC…CTDC), 101 to 153 (CQEC…CVPC), and 162 to 212 (CVQC…CLNC). Residue Lys78 forms a Glycyl lysine isopeptide (Lys-Gly) (interchain with G-Cter in SUMO2) linkage. Glycyl lysine isopeptide (Lys-Gly) (interchain with G-Cter in SUMO2) cross-links involve residues Lys167 and Lys220. Residues 221-275 (CAGCTNPISGLGGTKYISFEERQWHNDCFNCKKCSLSLVGRGFLTERDDILCPDC) form the LIM zinc-binding 4 domain. Residue Ser238 is modified to Phosphoserine.

As to quaternary structure, interacts with ZNF638 and TTN/titin. Interacts with E4F1. Interacts with GRB7. Interacts with SIRT1 and FOXO1. Interacts with CEFIP. Interacts with calcineurin. Interacts with FOXK1. As to expression, expressed in skeletal muscle and heart.

It localises to the cytoplasm. Its subcellular location is the nucleus. The protein localises to the myofibril. The protein resides in the sarcomere. It is found in the z line. Its function is as follows. May function as a molecular transmitter linking various signaling pathways to transcriptional regulation. Negatively regulates the transcriptional repressor E4F1 and may function in cell growth. Inhibits the transcriptional activity of FOXO1 and its apoptotic function by enhancing the interaction of FOXO1 with SIRT1 and FOXO1 deacetylation. Negatively regulates the calcineurin/NFAT signaling pathway in cardiomyocytes. In Homo sapiens (Human), this protein is Four and a half LIM domains protein 2 (FHL2).